The chain runs to 120 residues: Fumarate reductase subunit D (120 aa).

A run of 3 helical transmembrane segments spans residues 25-45, 55-75, and 100-120; these read FAMLTPVTILVLGILVPLGVI, VAGFVTSIIGALFVIGSISMP, and IACYATAALATVLSIVFIFMI.

This sequence belongs to the FrdD family. As to quaternary structure, part of an enzyme complex containing four subunits: a flavoprotein (FrdA), an iron-sulfur protein (FrdB), and two hydrophobic anchor proteins (FrdC and FrdD).

It is found in the cell inner membrane. Its function is as follows. Anchors the catalytic components of the fumarate reductase complex to the cell membrane, binds quinones. This chain is Fumarate reductase subunit D, found in Aliivibrio salmonicida (strain LFI1238) (Vibrio salmonicida (strain LFI1238)).